The chain runs to 485 residues: GlcNAc-binding protein A (485 aa).

Residues 1-23 (MKKQPKMTAIALILSGISGLAYG) form the signal peptide. The region spanning 24–201 (HGYVSAVENG…SFYNVIDVKF (178 aa)) is the Chitin-binding type-4 domain. The Chitin-binding type-3 domain maps to 437–478 (AGTKVLASDGAIYQCKPWPYSGYCQQWTSNATQYQPGTGSHW).

Belongs to the GbpA family.

It is found in the secreted. Probably interacts with GlcNAc residues. May promote attachment to both epithelial cell surfaces and chitin. The chain is GlcNAc-binding protein A from Vibrio cholerae serotype O1 (strain M66-2).